A 170-amino-acid chain; its full sequence is Bifunctional protein PyrR (170 aa).

A PRPP-binding motif is present at residues 90 to 102 (LVLIDDVLMSGRT).

The protein belongs to the purine/pyrimidine phosphoribosyltransferase family. PyrR subfamily.

The enzyme catalyses UMP + diphosphate = 5-phospho-alpha-D-ribose 1-diphosphate + uracil. Functionally, regulates the transcription of the pyrimidine nucleotide (pyr) operon in response to exogenous pyrimidines. Its function is as follows. Also displays a weak uracil phosphoribosyltransferase activity which is not physiologically significant. This is Bifunctional protein PyrR from Pseudomonas savastanoi pv. phaseolicola (strain 1448A / Race 6) (Pseudomonas syringae pv. phaseolicola (strain 1448A / Race 6)).